Reading from the N-terminus, the 215-residue chain is High mobility group protein B1 (215 aa).

1–10 (MGKGDPKKPR) is a heparin binding site. Positions 1–97 (MGKGDPKKPR…KFKDPNAPKR (97 aa)) are sufficient for interaction with HAVCR2. An N6-acetyllysine mark is found at Lys3, Lys7, Lys8, and Lys12. Positions 3–15 (KGDPKKPRGKMSS) are LPS binding (delipidated). Residues 9–79 (PRGKMSSYAF…RYEREMKTYI (71 aa)) constitute a DNA-binding region (HMG box 1). The residue at position 23 (Cys23) is a Cysteine sulfonic acid (-SO3H); alternate. A disulfide bridge links Cys23 with Cys45. The tract at residues 27–43 (HKKKHPDASVNFSEFSK) is NLS 1. Positions 27 to 43 (HKKKHPDASVNFSEFSK) match the Nuclear localization signal (NLS) 1 motif. Residues Lys28, Lys29, and Lys30 each carry the N6-acetyllysine modification. Residue Lys28 forms an Isoglutamyl lysine isopeptide (Lys-Gln) (interchain with Q-?) linkage. At Ser35 the chain carries Phosphoserine. Lys43 bears the N6-acetyllysine mark. Residues Lys43 and Lys44 each participate in an isoglutamyl lysine isopeptide (Lys-Gln) (interchain with Q-?) cross-link. Position 45 is a cysteine sulfonic acid (-SO3H); alternate (Cys45). Lys68 participates in a covalent cross-link: Isoglutamyl lysine isopeptide (Lys-Gln) (interchain with Q-?). The tract at residues 76–95 (KTYIPPKGETKKKFKDPNAP) is disordered. The LPS binding (Lipid A) stretch occupies residues 80–96 (PPKGETKKKFKDPNAPK). Residues 83-94 (GETKKKFKDPNA) are compositionally biased toward basic and acidic residues. The segment at 89–108 (FKDPNAPKRPPSAFFLFCSE) is cytokine-stimulating activity. Lys90 is modified (N6-acetyllysine). Positions 95–163 (PKRPPSAFFL…KYEKDIAAYR (69 aa)) form a DNA-binding region, HMG box 2. Residue Ser100 is modified to Phosphoserine. Residue Cys106 is modified to Cysteine sulfonic acid (-SO3H). Lys127, Lys128, Lys141, Lys172, Lys173, Lys177, and Lys180 each carry N6-acetyllysine. Residues 150–183 (KLKEKYEKDIAAYRAKGKPDAAKKGVVKAEKSKK) form a binding to AGER/RAGE region. Over residues 161–179 (AYRAKGKPDAAKKGVVKAE) the composition is skewed to basic and acidic residues. Residues 161-215 (AYRAKGKPDAAKKGVVKAEKSKKKKEEEEDEEDEEDEEEEEDEEDEDEEEDDDDE) are disordered. The interval 178–184 (AEKSKKK) is NLS 2. A Nuclear localization signal (NLS) 2 motif is present at residues 178 to 184 (AEKSKKK). Residue Lys180 forms an Isoglutamyl lysine isopeptide (Lys-Gln) (interchain with Q-?) linkage. Position 181 is an ADP-ribosylserine (Ser181). 4 positions are modified to N6-acetyllysine: Lys182, Lys183, Lys184, and Lys185. Residues Lys182, Lys183, and Lys184 each participate in an isoglutamyl lysine isopeptide (Lys-Gln) (interchain with Q-?) cross-link. The span at 187–215 (EEEDEEDEEDEEEEEDEEDEDEEEDDDDE) shows a compositional bias: acidic residues.

The protein belongs to the HMGB family. In terms of assembly, interacts (fully reduced HMGB1) with CXCL12; probably in a 1:2 ratio involving two molecules of CXCL12, each interacting with one HMG box of HMGB1; inhibited by glycyrrhizin. Associates with the TLR4:LY96 receptor complex. Component of the RAG complex composed of core components RAG1 and RAG2, and associated component HMGB1 or HMGB2. Interacts (in cytoplasm upon starvation) with BECN1; inhibits the interaction of BECN1 and BCL2 leading to promotion of autophagy. Interacts with KPNA1; involved in nuclear import. Interacts with SREBF1, TLR2, TLR4, TLR9, PTPRZ1, APEX1, FEN1, POLB, TERT. Interacts with IL1B, AGER, MSH2, XPA, XPC, HNF1A, TP53. Interacts with CD24; the probable CD24:SIGLEC10 complex is proposed to inhibit HGMB1-mediated tissue damage immune response. Interacts with THBD; prevents HGMB1 interaction with ACER/RAGE and inhibits HGMB1 pro-inflammatory activity. Interacts with HAVCR2; impairs HMGB1 binding to B-DNA and likely HMGB1-mediated innate immune response. Interacts with XPO1; mediating nuclear export. Interacts with receptor RAGE/AGER. Phosphorylated at serine residues. Phosphorylation in both NLS regions is required for cytoplasmic translocation followed by secretion. In terms of processing, acetylated on multiple sites upon stimulation with LPS. Acetylation on lysine residues in the nuclear localization signals (NLS 1 and NLS 2) leads to cytoplasmic localization and subsequent secretion. Acetylation on Lys-3 results in preferential binding to DNA ends and impairs DNA bending activity. Post-translationally, reduction/oxidation of cysteine residues Cys-23, Cys-45 and Cys-106 and a possible intramolecular disulfide bond involving Cys-23 and Cys-45 give rise to different redox forms with specific functional activities in various cellular compartments: 1- fully reduced HMGB1 (HMGB1C23hC45hC106h), 2- disulfide HMGB1 (HMGB1C23-C45C106h) and 3- sulfonyl HMGB1 (HMGB1C23soC45soC106so). Poly-ADP-ribosylated by PARP1 when secreted following stimulation with LPS. In terms of processing, in vitro cleavage by CASP1 is liberating a HMG box 1-containing peptide which may mediate immunogenic activity; the peptide antagonizes apoptosis-induced immune tolerance. Can be proteolytically cleaved by a thrombin:thrombomodulin complex; reduces binding to heparin and pro-inflammatory activities. Post-translationally, forms covalent cross-links mediated by transglutaminase TGM2, between a glutamine and the epsilon-amino group of a lysine residue, forming homopolymers and heteropolymers.

It localises to the nucleus. The protein resides in the chromosome. It is found in the cytoplasm. Its subcellular location is the secreted. The protein localises to the cell membrane. It localises to the endosome. The protein resides in the endoplasmic reticulum-Golgi intermediate compartment. In terms of biological role, multifunctional redox sensitive protein with various roles in different cellular compartments. In the nucleus is one of the major chromatin-associated non-histone proteins and acts as a DNA chaperone involved in replication, transcription, chromatin remodeling, V(D)J recombination, DNA repair and genome stability. Proposed to be an universal biosensor for nucleic acids. Promotes host inflammatory response to sterile and infectious signals and is involved in the coordination and integration of innate and adaptive immune responses. In the cytoplasm functions as a sensor and/or chaperone for immunogenic nucleic acids implicating the activation of TLR9-mediated immune responses, and mediates autophagy. Acts as a danger-associated molecular pattern (DAMP) molecule that amplifies immune responses during tissue injury. Released to the extracellular environment can bind DNA, nucleosomes, IL-1 beta, CXCL12, AGER isoform 2/sRAGE, lipopolysaccharide (LPS) and lipoteichoic acid (LTA), and activates cells through engagement of multiple surface receptors. In the extracellular compartment fully reduced HMGB1 (released by necrosis) acts as a chemokine, disulfide HMGB1 (actively secreted) as a cytokine, and sulfonyl HMGB1 (released from apoptotic cells) promotes immunological tolerance. Has proangiogenic activity. May be involved in platelet activation. Binds to phosphatidylserine and phosphatidylethanolamide. Bound to RAGE mediates signaling for neuronal outgrowth. May play a role in accumulation of expanded polyglutamine (polyQ) proteins. Nuclear functions are attributed to fully reduced HGMB1. Associates with chromatin and binds DNA with a preference to non-canonical DNA structures such as single-stranded DNA, DNA-containing cruciforms or bent structures, supercoiled DNA and ZDNA. Can bent DNA and enhance DNA flexibility by looping thus providing a mechanism to promote activities on various gene promoters by enhancing transcription factor binding and/or bringing distant regulatory sequences into close proximity. May be involved in nucleotide excision repair (NER), mismatch repair (MMR) and base excision repair (BER) pathways, and double strand break repair such as non-homologous end joining (NHEJ). Involved in V(D)J recombination by acting as a cofactor of the RAG complex: acts by stimulating cleavage and RAG protein binding at the 23 bp spacer of conserved recombination signal sequences (RSS). In vitro can displace histone H1 from highly bent DNA. Can restructure the canonical nucleosome leading to relaxation of structural constraints for transcription factor-binding. Enhances binding of sterol regulatory element-binding proteins (SREBPs) such as SREBF1 to their cognate DNA sequences and increases their transcriptional activities. Facilitates binding of TP53 to DNA. May be involved in mitochondrial quality control and autophagy in a transcription-dependent fashion implicating HSPB1. Can modulate the activity of the telomerase complex and may be involved in telomere maintenance. Its function is as follows. In the cytoplasm proposed to dissociate the BECN1:BCL2 complex via competitive interaction with BECN1 leading to autophagy activation. Can protect BECN1 and ATG5 from calpain-mediated cleavage and thus proposed to control their proautophagic and proapoptotic functions and to regulate the extent and severity of inflammation-associated cellular injury. In myeloid cells has a protective role against endotoxemia and bacterial infection by promoting autophagy. Involved in endosomal translocation and activation of TLR9 in response to CpG-DNA in macrophages. Functionally, in the extracellular compartment (following either active secretion or passive release) involved in regulation of the inflammatory response. Fully reduced HGMB1 (which subsequently gets oxidized after release) in association with CXCL12 mediates the recruitment of inflammatory cells during the initial phase of tissue injury; the CXCL12:HMGB1 complex triggers CXCR4 homodimerization. Induces the migration of monocyte-derived immature dendritic cells and seems to regulate adhesive and migratory functions of neutrophils implicating AGER/RAGE and ITGAM. Can bind to various types of DNA and RNA including microbial unmethylated CpG-DNA to enhance the innate immune response to nucleic acids. Proposed to act in promiscuous DNA/RNA sensing which cooperates with subsequent discriminative sensing by specific pattern recognition receptors. Promotes extracellular DNA-induced AIM2 inflammasome activation implicating AGER/RAGE. Disulfide HMGB1 binds to transmembrane receptors, such as AGER/RAGE, TLR2, TLR4 and probably TREM1, thus activating their signal transduction pathways. Mediates the release of cytokines/chemokines such as TNF, IL-1, IL-6, IL-8, CCL2, CCL3, CCL4 and CXCL10. Promotes secretion of interferon-gamma by macrophage-stimulated natural killer (NK) cells in concert with other cytokines like IL-2 or IL-12. TLR4 is proposed to be the primary receptor promoting macrophage activation and signaling through TLR4 seems to implicate LY96/MD-2. In bacterial LPS- or LTA-mediated inflammatory responses binds to the endotoxins and transfers them to CD14 for signaling to the respective TLR4:LY96 and TLR2 complexes. Contributes to tumor proliferation by association with ACER/RAGE. Can bind to IL1-beta and signals through the IL1R1:IL1RAP receptor complex. Binding to class A CpG activates cytokine production in plasmacytoid dendritic cells implicating TLR9, MYD88 and AGER/RAGE and can activate autoreactive B cells. Via HMGB1-containing chromatin immune complexes may also promote B cell responses to endogenous TLR9 ligands through a B-cell receptor (BCR)-dependent and ACER/RAGE-independent mechanism. Inhibits phagocytosis of apoptotic cells by macrophages; the function is dependent on poly-ADP-ribosylation and involves binding to phosphatidylserine on the cell surface of apoptotic cells. In adaptive immunity may be involved in enhancing immunity through activation of effector T-cells and suppression of regulatory T (TReg) cells. In contrast, without implicating effector or regulatory T-cells, required for tumor infiltration and activation of T-cells expressing the lymphotoxin LTA:LTB heterotrimer thus promoting tumor malignant progression. Also reported to limit proliferation of T-cells. Released HMGB1:nucleosome complexes formed during apoptosis can signal through TLR2 to induce cytokine production. Involved in induction of immunological tolerance by apoptotic cells; its pro-inflammatory activities when released by apoptotic cells are neutralized by reactive oxygen species (ROS)-dependent oxidation specifically on Cys-106. During macrophage activation by activated lymphocyte-derived self apoptotic DNA (ALD-DNA) promotes recruitment of ALD-DNA to endosomes. The polypeptide is High mobility group protein B1 (HMGB1) (Canis lupus familiaris (Dog)).